The primary structure comprises 635 residues: PTS system fructose-specific EIIABC component (635 aa).

In terms of domain architecture, PTS EIIA type-2 spans 5-149 (ELLTKHTIKL…DAIIDIINQH (145 aa)). The active-site Tele-phosphohistidine intermediate; for EIIA activity is the H67. At H67 the chain carries Phosphohistidine; by HPr. Residues 149-168 (HDKDDDEEEEEEEAAPAPAG) are disordered. Acidic residues predominate over residues 152–162 (DDDEEEEEEEA). A PTS EIIB type-2 domain is found at 172–267 (ILAVTACPTG…PQELIEKAMN (96 aa)). C178 (phosphocysteine intermediate; for EIIB activity) is an active-site residue. Phosphocysteine; by EIIA is present on C178. Residues 273-293 (YQGSGGGSAASNDDEEAKGKS) are disordered. One can recognise a PTS EIIC type-2 domain in the interval 301 to 635 (FYKHLMSGVS…GIVKKPVTEK (335 aa)). Helical transmembrane passes span 312 to 332 (MLPFVVGGGILVAISFFWGIH), 350 to 370 (FIGGDNALKLIVAVLAGFIAM), 392 to 412 (NAGFLGGLIAGFLAGYVVILL), 428 to 448 (PVLIYPLFGIFITGVLMQFVV), 470 to 490 (NLVLMGIILGGMMAIDMGGPL), 511 to 531 (AAIMAGGMVPPLGIALATTIF), 544 to 564 (ITCYFMGAAFVTEGAIPFAAA), 569 to 589 (VIPAAVVGAAVAGGLTEFFRV), and 608 to 628 (MLYLLSIVIGAVVMAIILGIV).

The protein localises to the cell membrane. It carries out the reaction D-fructose(out) + N(pros)-phospho-L-histidyl-[protein] = D-fructose 1-phosphate(in) + L-histidyl-[protein]. In terms of biological role, the phosphoenolpyruvate-dependent sugar phosphotransferase system (sugar PTS), a major carbohydrate active transport system, catalyzes the phosphorylation of incoming sugar substrates concomitantly with their translocation across the cell membrane. This system is involved in fructose transport. The chain is PTS system fructose-specific EIIABC component (fruA) from Bacillus subtilis (strain 168).